Here is a 321-residue protein sequence, read N- to C-terminus: Fe-S cluster assembly protein DRE2 (321 aa).

The N-terminal SAM-like domain stretch occupies residues 1 to 131; it reads MERMLLLSPP…KPDFGPENIV (131 aa). A linker region spans residues 132–213; that stretch reads PLKLGKRKPV…EETLLDGEDM (82 aa). Residues C223, C234, C237, and C239 each contribute to the [2Fe-2S] cluster site. The fe-S binding site A stretch occupies residues 223 to 239; the sequence is CRPKAGKRRRACKDCTC. Residues C284, C287, C295, and C298 each coordinate [4Fe-4S] cluster. 2 short sequence motifs (cx2C motif) span residues 284–287 and 295–298; these read CGNC and CDGC. The interval 284-298 is fe-S binding site B; that stretch reads CGNCALGDAFRCDGC.

It belongs to the anamorsin family. Monomer. Interacts with TAH18. Interacts with MIA40. Requires [2Fe-2S] cluster as cofactor. The cofactor is [4Fe-4S] cluster.

The protein localises to the cytoplasm. It is found in the mitochondrion intermembrane space. In terms of biological role, component of the cytosolic iron-sulfur (Fe-S) protein assembly (CIA) machinery required for the maturation of extramitochondrial Fe-S proteins. Part of an electron transfer chain functioning in an early step of cytosolic Fe-S biogenesis, facilitating the de novo assembly of a [4Fe-4S] cluster on the scaffold complex CFD1-NBP35. Electrons are transferred to DRE2 from NADPH via the FAD- and FMN-containing protein TAH18. TAH18-DRE2 are also required for the assembly of the diferric tyrosyl radical cofactor of ribonucleotide reductase (RNR), probably by providing electrons for reduction during radical cofactor maturation in the catalytic small subunit RNR2. This chain is Fe-S cluster assembly protein DRE2, found in Coccidioides immitis (strain RS) (Valley fever fungus).